The primary structure comprises 552 residues: FACT complex subunit POB3 (552 aa).

Over residues 190–205 (KKEESSNEVVPKKEDG) the composition is skewed to basic and acidic residues. Disordered stretches follow at residues 190 to 209 (KKEE…AEGE) and 484 to 552 (QTAL…PKVE). Acidic residues predominate over residues 490–529 (DSDEEDINMGSAGEDDESVDEDFQVSSDNDADEVAEEFDS). Residues 541–552 (DEERPSKKPKVE) are compositionally biased toward basic and acidic residues.

The protein belongs to the SSRP1 family. Forms a stable heterodimer with SPT16. The SPT16-POB3 dimer weakly associates with multiple molecules of NHP6 (NHP6A or NHP6B) to form the FACT (yFACT or SNP) complex. The FACT complex interacts with the CK2 (casein kinase II) complex subunits CKA1, CKA2, CKB1 and CKB2 and the components of the transcription machinery CHD1, CTR9, PAF1 and CDC73. The FACT complex interacts with the PAF1 complex. SPT16 interacts with SAS3 and POL1. Interacts directly with RFA1.

It is found in the nucleus. The protein resides in the chromosome. Its function is as follows. Component of the FACT complex, a general chromatin factor that acts to reorganize nucleosomes. The FACT complex is involved in multiple processes that require DNA as a template such as mRNA elongation, DNA replication and DNA repair. During transcription elongation the FACT complex acts as a histone chaperone that both destabilizes and restores nucleosomal structure. It facilitates the passage of RNA polymerase II and transcription by promoting the dissociation of one histone H2A-H2B dimer from the nucleosome, then subsequently promotes the reestablishment of the nucleosome following the passage of RNA polymerase II. Transcription elongation is promoted by the repression of transcription initiation from cryptic sites. Also acts in establishing transcription initiation complexes and promotes SPT15/TBP-binding to a TATA box. Together with replication factor-A protein (RPA), FACT may play a role in nucleosome deposition during DNA replication. This Saccharomyces cerevisiae (strain ATCC 204508 / S288c) (Baker's yeast) protein is FACT complex subunit POB3 (POB3).